Here is a 576-residue protein sequence, read N- to C-terminus: Plant intracellular Ras-group-related LRR protein 4 (576 aa).

Residues 130–151 show a composition bias toward low complexity; that stretch reads AAPAAATTTTSTAAAGSSSSSA. Positions 130 to 181 are disordered; the sequence is AAPAAATTTTSTAAAGSSSSSAVGNAERHASSGTNGFTASRVAGTSTSTGRV. A compositionally biased stretch (polar residues) spans 160 to 180; the sequence is SSGTNGFTASRVAGTSTSTGR. LRR repeat units follow at residues 272–295, 296–318, 320–341, 342–364, 366–387, 389–410, 411–433, 434–456, 458–481, 482–503, and 505–527; these read LTGL…IGKL, FSLA…IGDL, SLIY…IGRL, LNLE…IGSL, RLKK…IGHC, SLVE…VGKL, EPLE…MASL, TKLK…FCFA, SLIK…IGNL, EMLE…SFGN, and KHLR…IALK. The GVYW; degenerate motif lies at 528 to 535; sequence GAQAVVQY.

It belongs to the SHOC2 family. Widely expressed.

Its function is as follows. Leucine-rich repeat protein that likely mediates protein interactions, possibly in the context of signal transduction. This is Plant intracellular Ras-group-related LRR protein 4 (IRL4) from Oryza sativa subsp. japonica (Rice).